Here is a 101-residue protein sequence, read N- to C-terminus: MARPLEEALDVIVSTFHKYSGKEGDKFKLNKTELKELLTRELPSFLGKRTDEAAFQKVMSNLDSNRDNEVDFQEYCVFLSCIAMMCNEFFEGCPDKEPRKK.

An N-acetylalanine modification is found at Ala2. 2 EF-hand domains span residues 12-47 (IVSTFHKYSGKEGDKFKLNKTELKELLTRELPSFLG) and 50-85 (TDEAAFQKVMSNLDSNRDNEVDFQEYCVFLSCIAMM). Residues Lys28 and Glu33 each coordinate Ca(2+). Lys35 is subject to N6-acetyllysine. Asp63, Asn65, Asp67, Glu69, and Glu74 together coordinate Ca(2+).

This sequence belongs to the S-100 family. In terms of assembly, homodimer. Interacts with PPFIBP1 in a calcium-dependent mode. Interacts with PGLYRP1; this complex acts as a chemoattractant that promotes lymphocyte movement. Interacts with MYH9; this interaction increases cell motility. Interacts with Annexin 2/ANXA2. Interacts with TP53; this interaction promotes TP53 degradation. Interacts with CCR5 and CXCR3. Interacts with FCGR3A; this interaction inhibits PKC-dependent phosphorylation of FCGR3A. As to expression, specifically expressed in different metastatic cells.

It is found in the secreted. It localises to the nucleus. Its subcellular location is the cytoplasm. Calcium-binding protein that plays a role in various cellular processes including motility, angiogenesis, cell differentiation, apoptosis, and autophagy. Increases cell motility and invasiveness by interacting with non-muscle myosin heavy chain (NMMHC) IIA/MYH9. Mechanistically, promotes filament depolymerization and increases the amount of soluble myosin-IIA, resulting in the formation of stable protrusions facilitating chemotaxis. Also modulates the pro-apoptotic function of TP53 by binding to its C-terminal transactivation domain within the nucleus and reducing its protein levels. Within the extracellular space, stimulates cytokine production including granulocyte colony-stimulating factor and CCL24 from T-lymphocytes. In addition, stimulates T-lymphocyte chemotaxis by acting as a chemoattractant complex with PGLYRP1 that promotes lymphocyte migration via CCR5 and CXCR3 receptors. The sequence is that of Protein S100-A4 (S100a4) from Mus musculus (Mouse).